The primary structure comprises 379 residues: F-box protein At1g30200 (379 aa).

Residues 24 to 72 enclose the F-box domain; sequence DHFDLLPDSLLLLIFDKVADVKDLGRCCIVSRRFHSLVPFVENVLVRVD.

The sequence is that of F-box protein At1g30200 from Arabidopsis thaliana (Mouse-ear cress).